An 874-amino-acid polypeptide reads, in one-letter code: Leucine--tRNA ligase (874 aa).

The short motif at proline 43–histidine 53 is the 'HIGH' region element. The short motif at lysine 630–serine 634 is the 'KMSKS' region element. Lysine 633 is an ATP binding site.

Belongs to the class-I aminoacyl-tRNA synthetase family.

It localises to the cytoplasm. The catalysed reaction is tRNA(Leu) + L-leucine + ATP = L-leucyl-tRNA(Leu) + AMP + diphosphate. The chain is Leucine--tRNA ligase from Bradyrhizobium sp. (strain BTAi1 / ATCC BAA-1182).